Reading from the N-terminus, the 33-residue chain is Vejocalcin (33 aa).

Disulfide bonds link C3–C17, C10–C21, and C16–C32. Residues 23 to 24 (RR) are essential for stimulation of [3H]ryanodine binding to RYR1.

In terms of tissue distribution, expressed by the venom gland.

The protein resides in the secreted. In terms of biological role, this toxin stabilizes ryanodine receptor 1 (RyR1) opening in a long-lasting subconductance state (60% of the full conductance state). Furthermore, it triggers calcium release from sarcoplasmic vesicles (31 nM are enough to induce a sharp release, and 65% of the total calcium is released after toxin (100 nM) addition) probably by acting as a cell-penetrating peptide (CPP). In addition, it has been shown to dose-dependently stimulate ryanodine binding to RyR1 (EC(50)=3.7 nM). It also augments the bell-shaped calcium-[3H]ryanodine binding curve that is maximal at about 10 uM calcium concentration. It binds a different site as ryanodine. It acts synergistically with caffeine. In vivo, intracerebroventricular injection into mice induces neurotoxic symptoms, followed by death. This is Vejocalcin from Vaejovis mexicanus (Mexican scorpion).